Reading from the N-terminus, the 150-residue chain is Nucleoside diphosphate kinase (150 aa).

6 residues coordinate ATP: K9, F57, R85, T91, R102, and N112. The Pros-phosphohistidine intermediate role is filled by H115.

This sequence belongs to the NDK family. Requires Mg(2+) as cofactor.

The protein resides in the cytoplasm. It carries out the reaction a 2'-deoxyribonucleoside 5'-diphosphate + ATP = a 2'-deoxyribonucleoside 5'-triphosphate + ADP. The enzyme catalyses a ribonucleoside 5'-diphosphate + ATP = a ribonucleoside 5'-triphosphate + ADP. In terms of biological role, major role in the synthesis of nucleoside triphosphates other than ATP. The ATP gamma phosphate is transferred to the NDP beta phosphate via a ping-pong mechanism, using a phosphorylated active-site intermediate. The chain is Nucleoside diphosphate kinase from Methanothermobacter thermautotrophicus (strain ATCC 29096 / DSM 1053 / JCM 10044 / NBRC 100330 / Delta H) (Methanobacterium thermoautotrophicum).